The chain runs to 270 residues: UPF0354 protein BCG9842_B0431 (270 aa).

Belongs to the UPF0354 family.

The protein is UPF0354 protein BCG9842_B0431 of Bacillus cereus (strain G9842).